Consider the following 78-residue polypeptide: U7-lycotoxin-Ls1f (78 aa).

Positions 1–22 are cleaved as a signal peptide; it reads MKLIIFTGLALLLIVSLIDVEA. The propeptide occupies 23 to 26; that stretch reads QNEG.

Belongs to the neurotoxin 19 (CSTX) family. 07 (U7-Lctx) subfamily. Contains 4 disulfide bonds. In terms of tissue distribution, expressed by the venom gland.

It localises to the secreted. The sequence is that of U7-lycotoxin-Ls1f from Lycosa singoriensis (Wolf spider).